Here is a 519-residue protein sequence, read N- to C-terminus: Putative thymidine phosphorylase (519 aa).

It belongs to the thymidine/pyrimidine-nucleoside phosphorylase family. Type 2 subfamily.

The enzyme catalyses thymidine + phosphate = 2-deoxy-alpha-D-ribose 1-phosphate + thymine. This is Putative thymidine phosphorylase from Maricaulis maris (strain MCS10) (Caulobacter maris).